We begin with the raw amino-acid sequence, 164 residues long: Small ribosomal subunit protein uS5 (164 aa).

Residues 10–73 (LEERVVAINR…EDAKKNLIEV (64 aa)) form the S5 DRBM domain.

This sequence belongs to the universal ribosomal protein uS5 family. As to quaternary structure, part of the 30S ribosomal subunit. Contacts proteins S4 and S8.

With S4 and S12 plays an important role in translational accuracy. Functionally, located at the back of the 30S subunit body where it stabilizes the conformation of the head with respect to the body. The protein is Small ribosomal subunit protein uS5 of Streptococcus gordonii (strain Challis / ATCC 35105 / BCRC 15272 / CH1 / DL1 / V288).